Reading from the N-terminus, the 210-residue chain is Outer-membrane lipoprotein LolB (210 aa).

Residues 1–19 (MNHLKSFFTALVAGFILTA) form the signal peptide. Residue Cys-20 is the site of N-palmitoyl cysteine attachment. A lipid anchor (S-diacylglycerol cysteine) is attached at Cys-20.

The protein belongs to the LolB family. As to quaternary structure, monomer.

The protein localises to the cell outer membrane. Plays a critical role in the incorporation of lipoproteins in the outer membrane after they are released by the LolA protein. This chain is Outer-membrane lipoprotein LolB, found in Mannheimia succiniciproducens (strain KCTC 0769BP / MBEL55E).